The primary structure comprises 215 residues: Thymidylate kinase (215 aa).

13-20 (GLEGAGKS) contacts ATP.

This sequence belongs to the thymidylate kinase family.

The catalysed reaction is dTMP + ATP = dTDP + ADP. Its function is as follows. Phosphorylation of dTMP to form dTDP in both de novo and salvage pathways of dTTP synthesis. The sequence is that of Thymidylate kinase from Shewanella frigidimarina (strain NCIMB 400).